The chain runs to 565 residues: Sulfite reductase [NADPH] hemoprotein beta-component (565 aa).

The [4Fe-4S] cluster site is built by C429, C435, C474, and C478. C478 provides a ligand contact to siroheme.

Belongs to the nitrite and sulfite reductase 4Fe-4S domain family. As to quaternary structure, alpha(8)-beta(8). The alpha component is a flavoprotein, the beta component is a hemoprotein. The cofactor is siroheme. [4Fe-4S] cluster serves as cofactor.

The enzyme catalyses hydrogen sulfide + 3 NADP(+) + 3 H2O = sulfite + 3 NADPH + 4 H(+). Its pathway is sulfur metabolism; hydrogen sulfide biosynthesis; hydrogen sulfide from sulfite (NADPH route): step 1/1. Functionally, component of the sulfite reductase complex that catalyzes the 6-electron reduction of sulfite to sulfide. This is one of several activities required for the biosynthesis of L-cysteine from sulfate. This is Sulfite reductase [NADPH] hemoprotein beta-component from Shewanella baltica (strain OS155 / ATCC BAA-1091).